A 487-amino-acid chain; its full sequence is N-succinylglutamate 5-semialdehyde dehydrogenase (487 aa).

Residue Gly221–Gly226 coordinates NAD(+). Catalysis depends on residues Glu244 and Cys278.

It belongs to the aldehyde dehydrogenase family. AstD subfamily.

It catalyses the reaction N-succinyl-L-glutamate 5-semialdehyde + NAD(+) + H2O = N-succinyl-L-glutamate + NADH + 2 H(+). Its pathway is amino-acid degradation; L-arginine degradation via AST pathway; L-glutamate and succinate from L-arginine: step 4/5. Functionally, catalyzes the NAD-dependent reduction of succinylglutamate semialdehyde into succinylglutamate. This chain is N-succinylglutamate 5-semialdehyde dehydrogenase, found in Pseudomonas entomophila (strain L48).